The chain runs to 228 residues: L-ribulose-5-phosphate 4-epimerase UlaF (228 aa).

Substrate is bound by residues 26-27 (GN), 43-44 (SG), and 72-73 (SS). Positions 74, 93, and 95 each coordinate Zn(2+). The Proton donor/acceptor role is filled by aspartate 118. Position 167 (histidine 167) interacts with Zn(2+). Tyrosine 225 functions as the Proton donor/acceptor in the catalytic mechanism.

The protein belongs to the aldolase class II family. AraD/FucA subfamily. It depends on Zn(2+) as a cofactor.

The enzyme catalyses L-ribulose 5-phosphate = D-xylulose 5-phosphate. It functions in the pathway cofactor degradation; L-ascorbate degradation; D-xylulose 5-phosphate from L-ascorbate: step 4/4. Functionally, catalyzes the isomerization of L-ribulose 5-phosphate to D-xylulose 5-phosphate. Is involved in the anaerobic L-ascorbate utilization. The polypeptide is L-ribulose-5-phosphate 4-epimerase UlaF (Shigella flexneri).